The chain runs to 330 residues: Ketol-acid reductoisomerase (NADP(+)) (330 aa).

Residues Met-1–Thr-181 enclose the KARI N-terminal Rossmann domain. NADP(+)-binding positions include Tyr-24 to Gln-27, Arg-47, Ser-50, Ser-52, and Asp-82 to Gln-85. The active site involves His-107. Gly-133 lines the NADP(+) pocket. One can recognise a KARI C-terminal knotted domain in the interval Thr-182 to Leu-327. Asp-190, Glu-194, Glu-226, and Glu-230 together coordinate Mg(2+). Ser-251 is a binding site for substrate.

It belongs to the ketol-acid reductoisomerase family. Mg(2+) is required as a cofactor.

It catalyses the reaction (2R)-2,3-dihydroxy-3-methylbutanoate + NADP(+) = (2S)-2-acetolactate + NADPH + H(+). The catalysed reaction is (2R,3R)-2,3-dihydroxy-3-methylpentanoate + NADP(+) = (S)-2-ethyl-2-hydroxy-3-oxobutanoate + NADPH + H(+). It participates in amino-acid biosynthesis; L-isoleucine biosynthesis; L-isoleucine from 2-oxobutanoate: step 2/4. It functions in the pathway amino-acid biosynthesis; L-valine biosynthesis; L-valine from pyruvate: step 2/4. Its function is as follows. Involved in the biosynthesis of branched-chain amino acids (BCAA). Catalyzes an alkyl-migration followed by a ketol-acid reduction of (S)-2-acetolactate (S2AL) to yield (R)-2,3-dihydroxy-isovalerate. In the isomerase reaction, S2AL is rearranged via a Mg-dependent methyl migration to produce 3-hydroxy-3-methyl-2-ketobutyrate (HMKB). In the reductase reaction, this 2-ketoacid undergoes a metal-dependent reduction by NADPH to yield (R)-2,3-dihydroxy-isovalerate. This Chlorobium phaeovibrioides (strain DSM 265 / 1930) (Prosthecochloris vibrioformis (strain DSM 265)) protein is Ketol-acid reductoisomerase (NADP(+)).